The primary structure comprises 419 residues: Equilibrative nucleotide transporter 5 (419 aa).

The next 11 membrane-spanning stretches (helical) occupy residues 20–40, 56–76, 86–106, 108–128, 142–162, 186–206, 265–285, 292–312, 327–347, 354–374, and 393–413; these read MVVCCILGIGSLVSWNSLLSV, VLTFVYQPFSIGTIVIFAYNE, LIGYIVFTTSIFLLIILDLAT, GHGGIGPYIVLCAIVGSFGFA, LMCPELIQSFVAGLAVAGALT, IFLAISTLVEFLCVLLYAYVF, YVVNLFLIYVLTLSILPGFLY, GLGSWYALVLIAMYNWWDLVG, KGLTVAVLTRFLLVPAFYFTA, WMILLVSILGLTNGHLTVCIL, and LVLFILWGAFVGCALGWLWLI.

The protein belongs to the SLC29A/ENT transporter (TC 2.A.57) family.

The protein localises to the cell membrane. Functionally, may be involved in nucleoside transport. The sequence is that of Equilibrative nucleotide transporter 5 (ENT5) from Arabidopsis thaliana (Mouse-ear cress).